The primary structure comprises 285 residues: MAAITAALIKQVREETGAGMMDVKKALTEADGDVARAKEIIRAKGIQAAGKREGRKAQEGTIASTVIDSAAGQTGYAVELNSETDFVAKTPKFIDFADTVLADAVKAGADDIDAVLAAPSQDGTVKEAVEEASALFGEHVKVGQFAKIEGPKVEIYAHKKSVEMPPSIVAMIATDEAGAAVAHEAALQISAMGAQWLTRDDVPEDVVETERRVATEKSLAEGKPEKIVPKIVEGRLNAFFKENVLLEQAYVKDPSKTIGDLFKEVGGQALAFARLEVGKAPEADA.

The segment at 84–87 (TDFV) is involved in Mg(2+) ion dislocation from EF-Tu.

Belongs to the EF-Ts family.

The protein localises to the cytoplasm. In terms of biological role, associates with the EF-Tu.GDP complex and induces the exchange of GDP to GTP. It remains bound to the aminoacyl-tRNA.EF-Tu.GTP complex up to the GTP hydrolysis stage on the ribosome. The polypeptide is Elongation factor Ts (Bifidobacterium animalis subsp. lactis (strain AD011)).